The sequence spans 182 residues: Protein LURP-one-related 7 (182 aa).

Belongs to the LOR family.

Its function is as follows. Might be related to the phospholipid scramblase and tubby-like superfamily of membrane tethered transcription factors. This is Protein LURP-one-related 7 from Arabidopsis thaliana (Mouse-ear cress).